Here is an 89-residue protein sequence, read N- to C-terminus: Signal recognition particle 19 kDa protein (89 aa).

Belongs to the SRP19 family. Part of the signal recognition particle protein translocation system, which is composed of SRP and FtsY. Archaeal SRP consists of a 7S RNA molecule of 300 nucleotides and two protein subunits: SRP54 and SRP19.

The protein resides in the cytoplasm. In terms of biological role, involved in targeting and insertion of nascent membrane proteins into the cytoplasmic membrane. Binds directly to 7S RNA and mediates binding of the 54 kDa subunit of the SRP. This Methanococcus maripaludis (strain DSM 14266 / JCM 13030 / NBRC 101832 / S2 / LL) protein is Signal recognition particle 19 kDa protein.